The chain runs to 583 residues: MMSRLNSVVIKLWLTIILIVTTVLILLSIALITFMQYYFTQETENAIREDARRISSLVEQSHNKEEAIKYSQTLIENPGGLMIINNKHRQSTASLSNIKKQMLNEVVNNDHFDDVFDKGKSVTRNVTIKEKGSSQTYILLGYPTKAQKNSHSKYSGVFIYKDLKSIEDTNNAITIITIITAVIFLTITTVFAFFLSSRITKPLRRLRDQATRVSEGDYSYKPSVTTKDEIGQLSQAFNQMSTEIEEHVDALSTSKNIRDSLINSMVEGVLGINESRQIILSNKMANDIMDNIDEDAKAFLLRQIEDTFKSKQTEMRDLEMNTRFFVVTTSYIDKIEQGGKSGVVVTVRDMTNEHNLDQMKKDFIANVSHELRTPISLLQGYTESIVDGIVTEPDEIKESLAIVLDESKRLNRLVNELLNVARMDAEGLSVNKEVQPIAALLDKMKIKYRQQADDLGLNMTFNYCKKRVWTYDMDRMDQVLTNLIDNASRYTKPGDEIAITCDENESEDILYIKDTGTGIAPEHLQQVFDRFYKVDAARTRGKQGTGLGLFICKMIIEEHGGSIDVKSELGKGTTFIIKLPKPE.

The Cytoplasmic segment spans residues Met-1–Lys-11. A helical membrane pass occupies residues Leu-12–Ile-32. At Thr-33–Thr-174 the chain is on the extracellular side. Residues Ile-175–Leu-195 form a helical membrane-spanning segment. At Ser-196–Glu-583 the chain is on the cytoplasmic side. The HAMP domain occupies Ser-197–Asp-249. The Histidine kinase domain maps to Asn-366–Glu-583. Residue His-369 is modified to Phosphohistidine; by autocatalysis.

It localises to the cell membrane. It catalyses the reaction ATP + protein L-histidine = ADP + protein N-phospho-L-histidine.. Member of the two-component regulatory system SrrA/SrrB, which is involved in the global regulation of staphylococcal virulence factors in response to environmental oxygen levels as well as biofilm formation. Also plays an essential role in host-derived nitric oxide resistance by regulating hmp/flavohemoglobin, an enzyme that detoxifies nitric oxide by converting it to nitrate. Functions as a sensor protein kinase which is autophosphorylated at a histidine residue and transfers its phosphate group to SrrA. In turn, SrrA binds to the upstream promoter regions of the target genes to positively and negatively regulate their expression. This chain is Sensor protein SrrB (srrB), found in Staphylococcus aureus (strain MRSA252).